The following is a 180-amino-acid chain: MTKKFLNIHLTIAKFGAAHGILGWIRVFSYTEKKENIFDYVPWFIKKEQKIIKILPKYWKILKKTFLVKINDVNNRSMAQKLTNYDILINQKTLPKLNNNEYYWKDIVDCTVFDTNFIKLGRVSELIRTPSNDILVVKASNIKNISQNDMLIPFLHPQIISEVNINNKKIVIKNWKQTFE.

The PRC barrel domain occupies 99–179 (NNEYYWKDIV…IVIKNWKQTF (81 aa)).

Belongs to the RimM family. As to quaternary structure, binds ribosomal protein uS19.

Its subcellular location is the cytoplasm. Its function is as follows. An accessory protein needed during the final step in the assembly of 30S ribosomal subunit, possibly for assembly of the head region. Essential for efficient processing of 16S rRNA. May be needed both before and after RbfA during the maturation of 16S rRNA. It has affinity for free ribosomal 30S subunits but not for 70S ribosomes. This is Ribosome maturation factor RimM from Buchnera aphidicola subsp. Baizongia pistaciae (strain Bp).